The sequence spans 198 residues: Zinc finger protein 41 homolog (198 aa).

Residues 1–12 (MEKPAGRKKKTP) show a composition bias toward basic residues. The tract at residues 1 to 55 (MEKPAGRKKKTPTPREEADVQKSALREEKVSGDRKPPERPTVPRKPRTEPCLSPE) is disordered. Positions 13 to 38 (TPREEADVQKSALREEKVSGDRKPPE) are enriched in basic and acidic residues. C2H2-type zinc fingers lie at residues 87 to 109 (YECS…QRVH), 115 to 137 (FKCA…QRTH), 143 to 165 (FKCG…QKTH), and 171 to 193 (YECT…QKRH).

The protein belongs to the krueppel C2H2-type zinc-finger protein family.

It localises to the nucleus. Functionally, a putative DNA-binding regulatory protein associated with meiosis in spermatogenesis. The chain is Zinc finger protein 41 homolog (ZFP41) from Homo sapiens (Human).